The sequence spans 365 residues: Mannonate dehydratase 1 (365 aa).

Belongs to the mannonate dehydratase family. Requires Fe(2+) as cofactor. Mn(2+) is required as a cofactor.

It carries out the reaction D-mannonate = 2-dehydro-3-deoxy-D-gluconate + H2O. It functions in the pathway carbohydrate metabolism; pentose and glucuronate interconversion. Functionally, catalyzes the dehydration of D-mannonate. This is Mannonate dehydratase 1 from Bacillus licheniformis (strain ATCC 14580 / DSM 13 / JCM 2505 / CCUG 7422 / NBRC 12200 / NCIMB 9375 / NCTC 10341 / NRRL NRS-1264 / Gibson 46).